A 539-amino-acid polypeptide reads, in one-letter code: DNA damage-binding protein CMR1 (539 aa).

The tract at residues 22 to 89 is disordered; that stretch reads LNLPTEAKKE…ALKQEDLGGS (68 aa). Positions 27–39 are enriched in basic and acidic residues; the sequence is EAKKESVDPEVAP. 6 WD repeats span residues 182-223, 226-268, 316-356, 377-415, 462-505, and 508-539; these read VTKE…EPLQ, LHHA…DVLD, LGEK…TART, NSRLSVSSTDWNLAGQIVCNGYDDTINIFNQSDYFLDML, GRWV…LAHL, and ALMTAVPSALAFHPTQNWIAGGNSSGKMYWWE.

Belongs to the WD repeat DDB2/WDR76 family.

DNA-binding protein that binds to both single- and double-stranded DNA. Binds preferentially to UV-damaged DNA. May be involved in DNA-metabolic processes. In Yarrowia lipolytica (strain CLIB 122 / E 150) (Yeast), this protein is DNA damage-binding protein CMR1.